We begin with the raw amino-acid sequence, 634 residues long: 1-deoxy-D-xylulose-5-phosphate synthase (634 aa).

Thiamine diphosphate-binding positions include His-72 and 113-115 (GHS). Mg(2+) is bound at residue Asp-144. Residues 145-146 (GA), Asn-173, Tyr-284, and Glu-367 each bind thiamine diphosphate. Asn-173 is a binding site for Mg(2+).

The protein belongs to the transketolase family. DXPS subfamily. Homodimer. It depends on Mg(2+) as a cofactor. Requires thiamine diphosphate as cofactor.

The enzyme catalyses D-glyceraldehyde 3-phosphate + pyruvate + H(+) = 1-deoxy-D-xylulose 5-phosphate + CO2. It functions in the pathway metabolic intermediate biosynthesis; 1-deoxy-D-xylulose 5-phosphate biosynthesis; 1-deoxy-D-xylulose 5-phosphate from D-glyceraldehyde 3-phosphate and pyruvate: step 1/1. Functionally, catalyzes the acyloin condensation reaction between C atoms 2 and 3 of pyruvate and glyceraldehyde 3-phosphate to yield 1-deoxy-D-xylulose-5-phosphate (DXP). The protein is 1-deoxy-D-xylulose-5-phosphate synthase of Listeria welshimeri serovar 6b (strain ATCC 35897 / DSM 20650 / CCUG 15529 / CIP 8149 / NCTC 11857 / SLCC 5334 / V8).